The chain runs to 115 residues: Small ribosomal subunit protein bS18c (115 aa).

The interval 91–115 is disordered; it reads TNALKARTQNKDQKKEKFQINKKKK. Residues 99-109 are compositionally biased toward basic and acidic residues; that stretch reads QNKDQKKEKFQ.

This sequence belongs to the bacterial ribosomal protein bS18 family. As to quaternary structure, part of the 30S ribosomal subunit.

The protein localises to the plastid. It is found in the chloroplast. This Ipomoea purpurea (Common morning glory) protein is Small ribosomal subunit protein bS18c.